Here is a 98-residue protein sequence, read N- to C-terminus: Parvalbumin beta 1 (98 aa).

An N-acetylserine modification is found at S1. 2 consecutive EF-hand domains span residues 32-67 (KIGLAGKKVFAIIDQDKSDFVEEDELKLFLQVFSAG) and 67-98 (GARALTDAETKAGDSDGDGKIGVDEFAQMIKG). Ca(2+)-binding residues include D45, D47, S49, F51, E53, E56, D80, D82, D84, K86, and E91.

The protein belongs to the parvalbumin family.

In muscle, parvalbumin is thought to be involved in relaxation after contraction. It binds two calcium ions. In Macruronus magellanicus (Patagonian grenadier), this protein is Parvalbumin beta 1.